The primary structure comprises 993 residues: Testis-expressed protein 13C (993 aa).

Disordered regions lie at residues 281 to 381, 520 to 547, and 894 to 959; these read QEET…SLKK, DSKSHRMKKDPVMPQKMVPLGDSRSHSL, and FSKS…PVNW. Residues 325–335 show a composition bias toward polar residues; that stretch reads GMTSQGDSSSH. Positions 353-364 are enriched in basic and acidic residues; it reads SRSHSLEKKPVM. Residues 944–957 are compositionally biased toward polar residues; the sequence is ESQQQKPASCSSPV. A RanBP2-type zinc finger spans residues 955–984; that stretch reads SPVNWACPWCNAMNFPRNKVCSKCKRVRMP.

Belongs to the TEX13 family.

This Homo sapiens (Human) protein is Testis-expressed protein 13C.